The primary structure comprises 390 residues: Pyruvate dehydrogenase E1 component subunit alpha, somatic form, mitochondrial (390 aa).

The N-terminal 29 residues, 1-29, are a transit peptide targeting the mitochondrion; sequence MRKMLAAVSRVLSGVAQKPASRVLVASRH. N6-acetyllysine; alternate is present on Lys-63. Lys-63 carries the N6-succinyllysine; alternate modification. Pyruvate contacts are provided by His-92, Tyr-118, Arg-119, Ala-157, Gly-165, Val-167, Asp-196, Gly-197, Ala-198, Asn-225, and Tyr-227. Thiamine diphosphate is bound by residues Tyr-118 and Arg-119. Positions 165, 167, 196, 197, 198, and 225 each coordinate thiamine diphosphate. Asp-196 is a binding site for Mg(2+). Mg(2+) is bound by residues Asn-225 and Tyr-227. Ser-232 is subject to Phosphoserine; by PDK1. Lys-244 is modified (N6-acetyllysine; alternate). The residue at position 244 (Lys-244) is an N6-succinyllysine; alternate. Lys-267 is subject to N6-acetyllysine. Lys-277 carries the post-translational modification N6-succinyllysine. His-292 contacts thiamine diphosphate. Phosphoserine; by PDK1, PDK2, PDK3 and PDK4 is present on Ser-293. Phosphoserine is present on Ser-295. The residue at position 300 (Ser-300) is a Phosphoserine; by PDK1, PDK2, PDK3 and PDK4. A Phosphotyrosine modification is found at Tyr-301. N6-acetyllysine; alternate is present on Lys-313. N6-succinyllysine; alternate is present on Lys-313. N6-acetyllysine occurs at positions 321 and 336. At Lys-385 the chain carries N6-succinyllysine.

In terms of assembly, heterotetramer of two PDHA1 and two PDHB subunits. The heterotetramer interacts with DLAT, and is part of the multimeric pyruvate dehydrogenase complex that contains multiple copies of pyruvate dehydrogenase (E1), dihydrolipoamide acetyltransferase (DLAT, E2) and lipoamide dehydrogenase (DLD, E3). These subunits are bound to an inner core composed of about 48 DLAT and 12 PDHX molecules. The cofactor is thiamine diphosphate. Mg(2+) serves as cofactor. Post-translationally, phosphorylation at Ser-232, Ser-293 and Ser-300 by PDK family kinases inactivates the enzyme; for this phosphorylation at a single site is sufficient. Phosphorylation at Ser-293 interferes with access to active site, and thereby inactivates the enzyme. Dephosphorylation at all three sites, i.e. at Ser-232, Ser-293 and Ser-300, is required for reactivation. In terms of processing, acetylation alters the phosphorylation pattern. Deacetylated by SIRT3.

It localises to the mitochondrion matrix. It carries out the reaction N(6)-[(R)-lipoyl]-L-lysyl-[protein] + pyruvate + H(+) = N(6)-[(R)-S(8)-acetyldihydrolipoyl]-L-lysyl-[protein] + CO2. Its activity is regulated as follows. Pyruvate dehydrogenase activity is inhibited by phosphorylation of PDHA1; it is reactivated by dephosphorylation. In terms of biological role, the pyruvate dehydrogenase complex catalyzes the overall conversion of pyruvate to acetyl-CoA and CO(2), and thereby links the glycolytic pathway to the tricarboxylic cycle. The sequence is that of Pyruvate dehydrogenase E1 component subunit alpha, somatic form, mitochondrial (PDHA1) from Bos taurus (Bovine).